Reading from the N-terminus, the 638-residue chain is Keratin, type II cytoskeletal 2 oral (638 aa).

Residues 1 to 182 (MNRQVCKKSF…DPQIGQVKAQ (182 aa)) form a head region. Arg85 and Arg110 each carry omega-N-methylarginine. A coil 1A region spans residues 183-218 (EREQIKTLNNKFASFIDKVRFLEQQNKVLETKWELL). An IF rod domain is found at 183 to 496 (EREQIKTLNN…KLLEGEECRM (314 aa)). Residues 219–237 (QQQTTGSGPSSLEPCFESY) form a linker 1 region. The coil 1B stretch occupies residues 238 to 329 (ISFLCKQLDS…TLYEMELSQM (92 aa)). The linker 12 stretch occupies residues 330-353 (QSHASDTSVVLSMDNNRCLDLGSI). A coil 2 region spans residues 354-492 (IAEVRAQYEE…ATYRKLLEGE (139 aa)). The tract at residues 493–638 (ECRMSGECQS…TSSSQHSSTK (146 aa)) is tail. The interval 532–638 (SGSGGYKGGS…TSSSQHSSTK (107 aa)) is disordered. Residues 540 to 549 (GSSSSSSSGY) are compositionally biased toward low complexity. The span at 550–572 (GVSGGSGSGYGGVSSGSTGGRGS) shows a compositional bias: gly residues. The span at 573–583 (SGSYQSSSSGS) shows a compositional bias: low complexity. Arg584 bears the Omega-N-methylarginine mark. A compositionally biased stretch (low complexity) spans 590-608 (SISVSHSGMGSSSGSIQTS). Gly residues predominate over residues 609-620 (GGSGYKSGGGGS). Residues 626–638 (SQTTSSSQHSSTK) are compositionally biased toward low complexity.

Belongs to the intermediate filament family. Heterotetramer of two type I and two type II keratins.

In terms of biological role, probably contributes to terminal cornification. This is Keratin, type II cytoskeletal 2 oral (KRT76) from Homo sapiens (Human).